The chain runs to 232 residues: U2 small nuclear ribonucleoprotein B'' (232 aa).

The region spanning 10-89 (QTVYLRNLNE…KRMRVQYAKT (80 aa)) is the RRM 1 domain. The disordered stretch occupies residues 90 to 159 (RSDCLATEDG…QEPPAPPNNI (70 aa)). The segment covering 108–123 (KKQEEKAAEKKRRAEE) has biased composition (basic and acidic residues). The span at 127 to 151 (SGPNAAAQSNGTGYQASRLGKTSQE) shows a compositional bias: polar residues. One can recognise an RRM 2 domain in the interval 158–232 (NILFIQNLPA…NPMAISYAKK (75 aa)).

Belongs to the RRM U1 A/B'' family. In terms of assembly, component of the spliceosome where it is associated with snRNP U2.

The protein localises to the nucleus. Its subcellular location is the cajal body. It is found in the nucleoplasm. The protein resides in the cytoplasm. Involved in nuclear pre-mRNA splicing. This Oryza sativa subsp. japonica (Rice) protein is U2 small nuclear ribonucleoprotein B''.